Reading from the N-terminus, the 494-residue chain is Psoralen synthase (494 aa).

Residues 12–29 form a helical membrane-spanning segment; sequence YFFSLFLVTIFLYKWLTL. Position 436 (Cys436) interacts with heme.

This sequence belongs to the cytochrome P450 family.

It localises to the endoplasmic reticulum membrane. It is found in the microsome membrane. It carries out the reaction (7S)-marmesin + reduced [NADPH--hemoprotein reductase] + O2 = psoralen + acetone + oxidized [NADPH--hemoprotein reductase] + 2 H2O + H(+). Inhibited by columbianetin. Involved in linear furanocumarin (psoralen) biosynthesis. Converts marmesin to psoralen. This chain is Psoralen synthase (CYP71AJ1), found in Ammi majus (Bishop's weed).